Here is a 216-residue protein sequence, read N- to C-terminus: MRLILLGPPGAGKGTQAASIVEKYHIPHISTGDIFRYNIKQGTELGKKAKSYMDQGLLVPDEVVVEIVEDRLKKEDCENGFLLDGFPRTVVQAEALDKALVDMNISLDKVINIQVDKERLIERAVGRRICRECGATFHVQYNPSTKGALCDQCGGELYQRDDDNEETVTRRIEVYLSETTPLVEYYSSQNKLVTIDGDKKINEVFANIVTSLGSDL.

10 to 15 (GAGKGT) lines the ATP pocket. The tract at residues 30 to 59 (STGDIFRYNIKQGTELGKKAKSYMDQGLLV) is NMP. Residues Thr-31, Arg-36, 57–59 (LLV), 85–88 (GFPR), and Gln-92 each bind AMP. Residues 126-163 (GRRICRECGATFHVQYNPSTKGALCDQCGGELYQRDDD) are LID. An ATP-binding site is contributed by Arg-127. The Zn(2+) site is built by Cys-130 and Cys-133. ATP is bound at residue 136 to 137 (TF). Zn(2+)-binding residues include Cys-150 and Cys-153. AMP contacts are provided by Arg-160 and Arg-171. Lys-199 contributes to the ATP binding site.

The protein belongs to the adenylate kinase family. In terms of assembly, monomer.

The protein localises to the cytoplasm. The catalysed reaction is AMP + ATP = 2 ADP. It participates in purine metabolism; AMP biosynthesis via salvage pathway; AMP from ADP: step 1/1. Its function is as follows. Catalyzes the reversible transfer of the terminal phosphate group between ATP and AMP. Plays an important role in cellular energy homeostasis and in adenine nucleotide metabolism. This is Adenylate kinase from Alkaliphilus oremlandii (strain OhILAs) (Clostridium oremlandii (strain OhILAs)).